The following is a 226-amino-acid chain: Ribose-5-phosphate isomerase A (226 aa).

Residues 33 to 36 (TGST), 86 to 89 (DGAD), and 99 to 102 (KGGG) contribute to the substrate site. Glu-108 (proton acceptor) is an active-site residue. Lys-126 is a binding site for substrate.

It belongs to the ribose 5-phosphate isomerase family. Homodimer.

The catalysed reaction is aldehydo-D-ribose 5-phosphate = D-ribulose 5-phosphate. Its pathway is carbohydrate degradation; pentose phosphate pathway; D-ribose 5-phosphate from D-ribulose 5-phosphate (non-oxidative stage): step 1/1. In terms of biological role, catalyzes the reversible conversion of ribose-5-phosphate to ribulose 5-phosphate. The sequence is that of Ribose-5-phosphate isomerase A from Bordetella pertussis (strain Tohama I / ATCC BAA-589 / NCTC 13251).